A 138-amino-acid polypeptide reads, in one-letter code: Large ribosomal subunit protein uL29 (138 aa).

A large ribosomal subunit protein uL29 region spans residues Met1–Asn79. The tract at residues Lys80 to Lys138 is unknown. The disordered stretch occupies residues Gln103 to Lys138.

The protein belongs to the universal ribosomal protein uL29 family.

This chain is Large ribosomal subunit protein uL29, found in Mycoplasma capricolum subsp. capricolum (strain California kid / ATCC 27343 / NCTC 10154).